A 246-amino-acid chain; its full sequence is Flagellar brake protein YcgR (246 aa).

The 105-residue stretch at 128–232 (KRAHFRAYVG…QAERQLLQAI (105 aa)) folds into the PilZ domain.

It belongs to the YcgR family. In terms of assembly, monomer. Interacts with the flagellar basal bodies.

Its subcellular location is the bacterial flagellum basal body. In terms of biological role, acts as a flagellar brake, regulating swimming and swarming in a bis-(3'-5') cyclic diguanylic acid (c-di-GMP)-dependent manner. Binds 1 c-di-GMP dimer per subunit. Increasing levels of c-di-GMP lead to decreased motility. This chain is Flagellar brake protein YcgR, found in Thioalkalivibrio sulfidiphilus (strain HL-EbGR7).